The chain runs to 1109 residues: Zinc finger E-box-binding homeobox 1 (1109 aa).

2 disordered regions span residues 1–106 (MADG…DPNV) and 123–143 (PEED…NGTP). Residues 15–30 (PRRNNVTNYNTVVEAN) show a composition bias toward low complexity. Residues Ser31 and Ser33 each carry the phosphoserine modification. Over residues 87–98 (VKDDECDSDAEN) the composition is skewed to acidic residues. The C2H2-type 1 zinc finger occupies 150–173 (LTCPYCDRGYKRFTSLKEHIKYRH). Residues Lys166 and Lys175 each participate in a glycyl lysine isopeptide (Lys-Gly) (interchain with G-Cter in SUMO2) cross-link. 2 consecutive C2H2-type zinc fingers follow at residues 180-202 (FSCS…MTSH) and 220-242 (FKCT…LRIH). Residues 248-272 (YECPNCKKRFSHSGSYSSHISSKKC) form a C2H2-type 4; atypical zinc finger. Residues 278–307 (VNGRPRSGLKTSQCSSPSLSTSPGSPTRPQ) form a disordered region. Lys287 is covalently cross-linked (Glycyl lysine isopeptide (Lys-Gly) (interchain with G-Cter in SUMO2)). The segment covering 288–304 (TSQCSSPSLSTSPGSPT) has biased composition (low complexity). A phosphoserine mark is found at Ser293 and Ser302. Glycyl lysine isopeptide (Lys-Gly) (interchain with G-Cter in SUMO2) cross-links involve residues Lys311 and Lys315. Residue Lys327 forms a Glycyl lysine isopeptide (Lys-Gly) (interchain with G-Cter in SUMO); alternate linkage. Lys327 participates in a covalent cross-link: Glycyl lysine isopeptide (Lys-Gly) (interchain with G-Cter in SUMO2); alternate. Residues Lys419, Lys473, Lys484, Lys495, and Lys528 each participate in a glycyl lysine isopeptide (Lys-Gly) (interchain with G-Cter in SUMO2) cross-link. Disordered regions lie at residues 468 to 501 (VPQN…KDKS), 525 to 566 (PELK…SQPP), and 614 to 711 (QIPG…PQVE). The span at 483 to 501 (CKSEKSPEDLTVKSEKDKS) shows a compositional bias: basic and acidic residues. The segment at residues 559 to 618 (DLSPSQPPLKNLLSLLKAYYALNAQPSTEELTKIADSVNLPLDVVKKWFEKMQAGQIPGQ) is a DNA-binding region (homeobox; atypical). Residues 654 to 665 (RGQSPLKMTSSP) show a composition bias toward polar residues. 4 positions are modified to phosphoserine: Ser657, Ser664, Ser671, and Ser678. Over residues 673–703 (INGSRSCTSSPSPLNLSSARNPQGYSCVSEG) the composition is skewed to polar residues. Thr680 carries the post-translational modification Phosphothreonine. Ser682 is modified (phosphoserine). Lys752 is covalently cross-linked (Glycyl lysine isopeptide (Lys-Gly) (interchain with G-Cter in SUMO); alternate). A Glycyl lysine isopeptide (Lys-Gly) (interchain with G-Cter in SUMO2); alternate cross-link involves residue Lys752. Residues 834–873 (PPVKVIQPNGNQDERQDTSSEGVSVEDQNDSDCTPPKKKT) form a disordered region. C2H2-type zinc fingers lie at residues 881–903 (YACD…KYEH) and 909–931 (HECG…MRLH). Residues 937 to 958 (YQCDKCGKRFSHSGSYSQHMNH) form a C2H2-type 7; atypical zinc finger. Positions 968–1109 (EDRDAMEQED…RLSEEKTNEA (142 aa)) are disordered. The span at 1012–1066 (EEDEDSEKEEEEEDKEMEELQEDKECENPQEEEEEEEEEEEEEEEEEEEEAEEAE) shows a compositional bias: acidic residues. The span at 1071–1087 (AAKTGGAVEEEAAQQAG) shows a compositional bias: low complexity. Over residues 1097–1109 (ESKRLSEEKTNEA) the composition is skewed to basic and acidic residues.

This sequence belongs to the delta-EF1/ZFH-1 C2H2-type zinc-finger family. In terms of assembly, interacts (via N-terminus) with SMARCA4/BRG1. Ubiquitinated, leading to degradation in a proteasome-dependent manner. Deubiquitinated by USP51, leading to stabilization.

It is found in the nucleus. Functionally, acts as a transcriptional repressor. Binds to E-box sequences in the immunoglobulin heavy chain enhancer as well as in the regulatory regions of many other tissue-specific genes. Represses E-cadherin promoter and induces an epithelial-mesenchymal transition (EMT) by recruiting SMARCA4/BRG1. Represses BCL6 transcription in the presence of the corepressor CTBP1. Positively regulates neuronal differentiation. Represses RCOR1 transcription activation during neurogenesis. Represses transcription by binding to the E box (5'-CANNTG-3'). In the absence of TGFB1, acts as a repressor of COL1A2 transcription via binding to the E-box in the upstream enhancer region. The sequence is that of Zinc finger E-box-binding homeobox 1 from Rattus norvegicus (Rat).